Consider the following 1210-residue polypeptide: MSYEDYQYNETLTQEDCWTVISSFFEETSLARQQLFSFDEFVQNTMQEIVDDDSTLTLDQYAQHTGAQGDVTRRYEINFGQIYLSRPTMTEADGSTTTMFPQEARLRNLTYSSPLYVDMRKKVMVAADSNVPIGEEEWLVEEEDEEPSKVFIGKIPIMLRSTFCILNGVSDSELYDLNECPYDQGGYFIINGSEKVIIAQERSAANIVQVFKKAAPSPIAYVAEIRSALERGSRLISSMQIKLMARNTENSGQTIRATLPYIRSDIPIVIVFRALGVVPDRDILEHICYDPNDFQMLEMMKPCIEEAFVIQDKDIALDYIGKRGSTTGVTREKRLRYAHDILQKELLPHITTMEGFETRKAFFLGYMIHRMLLCALERREPDDRDHFGKKRLDLAGPLLASLFRMLFRKMTRDVYKYMQKCVETNREFNLTLAVKSNIITNGLRYSLATGNWGDQKRSMVNRVGVSQVLNRYTFASTLSHLRRTNTPIGRDGKLAKPRQLHNTHWGMVCPAETPEGQACGLVKNLSLMSYVSVGSPSAPIIEFLEEWGLETLEDYNPSASPNATKVFVNGVWLGVHRDPAHLTETLRSLRRRLDISAEVSIVRDIREKELRLFTDAGRICRPLFIVDNNPNSERRGELCIRKEHIQQLIEDKDRYDIDPEQRFGWTALVSSGLIEYLDAEEEETVMIAMSPEDLEASRQMQAGYEVKEELDPAQRVKPAPNPHVHAWTHCEIHPAMILGILASIIPFPDHNQSPRNTYQSAMGKQAMGVYLTNYQVRMDTMANILYYPQKPLATTRSMEYLKFRELPAGQNAIVAILCYSGYNQEDSIIMNQASIDRGLFRSIFYRTYTDQEKKIGMTVMEEFERPVRSTTLRMKHGTYDKLEDDGLIAPGTRVSGEDIIIGKTAPIPLDHEELGQRTQLHAKRDVSTPLRSTESGIVDQVMVTTNQEGLKFVKVRMRSTRIPQIGDKFASRHGQKGTIGMTYRHEDMPFSAQGIVPDIIINPHAIPSRMTVAHLVECQLSKVSALSGFEGDATPFTDVTVEAVSKLLRSHGFQSRGFEVMYHGHTGRKLVAQVFLGPTYYQRLKHLVDDKIHARARGPVQILTRQPVEGRSRDGGLRFGEMERDCQISHGCSSVLRERLFDCSDAYRVIVCDICGLIAIASYKKDSYECRSCQNRTRFSQVYLPYAAKLLFQELMSMNIAPRLFTKNHK.

Asp826 provides a ligand contact to Mg(2+). Residues Cys1152, Cys1155, Cys1170, and Cys1173 each coordinate Zn(2+). The C4-type zinc-finger motif lies at 1152 to 1173 (CDICGLIAIASYKKDSYECRSC).

It belongs to the RNA polymerase beta chain family. Component of the RNA polymerase II (Pol II) complex consisting of 12 subunits.

The protein resides in the nucleus. The catalysed reaction is RNA(n) + a ribonucleoside 5'-triphosphate = RNA(n+1) + diphosphate. Its function is as follows. DNA-dependent RNA polymerase catalyzes the transcription of DNA into RNA using the four ribonucleoside triphosphates as substrates. Second largest component of RNA polymerase II which synthesizes mRNA precursors and many functional non-coding RNAs. Proposed to contribute to the polymerase catalytic activity and forms the polymerase active center together with the largest subunit. Pol II is the central component of the basal RNA polymerase II transcription machinery. It is composed of mobile elements that move relative to each other. RPB2 is part of the core element with the central large cleft, the clamp element that moves to open and close the cleft and the jaws that are thought to grab the incoming DNA template. This is DNA-directed RNA polymerase II subunit RPB2 (rpb2) from Schizosaccharomyces pombe (strain 972 / ATCC 24843) (Fission yeast).